Consider the following 67-residue polypeptide: Large ribosomal subunit protein uL30 (67 aa).

It belongs to the universal ribosomal protein uL30 family. Part of the 50S ribosomal subunit.

In Hamiltonella defensa subsp. Acyrthosiphon pisum (strain 5AT), this protein is Large ribosomal subunit protein uL30.